We begin with the raw amino-acid sequence, 381 residues long: Creatine kinase M-type (381 aa).

Positions 11–98 (KLNYKPQEEY…FDPIIQDRHG (88 aa)) constitute a Phosphagen kinase N-terminal domain. One can recognise a Phosphagen kinase C-terminal domain in the interval 125–367 (YVLSSRVRTG…KLMVEMEKKL (243 aa)). Position 128 to 132 (128 to 132 (SSRVR)) interacts with ATP. S164 is subject to Phosphoserine. Position 166 is a phosphothreonine (T166). A Phosphoserine modification is found at S178. At T180 the chain carries Phosphothreonine. Position 191 (H191) interacts with ATP. S199 carries the phosphoserine modification. ATP contacts are provided by R236 and R292. T313 and T322 each carry phosphothreonine. ATP is bound by residues 320–325 (RGTGGV) and D335. Position 372 is a phosphoserine (S372).

This sequence belongs to the ATP:guanido phosphotransferase family. In terms of assembly, dimer of identical or non-identical chains, which can be either B (brain type) or M (muscle type). With MM being the major form in skeletal muscle and myocardium, MB existing in myocardium, and BB existing in many tissues, especially brain.

It is found in the cytoplasm. It catalyses the reaction creatine + ATP = N-phosphocreatine + ADP + H(+). In terms of biological role, reversibly catalyzes the transfer of phosphate between ATP and various phosphogens (e.g. creatine phosphate). Creatine kinase isoenzymes play a central role in energy transduction in tissues with large, fluctuating energy demands, such as skeletal muscle, heart, brain and spermatozoa. The polypeptide is Creatine kinase M-type (Ckm) (Mus musculus (Mouse)).